The primary structure comprises 210 residues: Large ribosomal subunit protein uL3 (210 aa).

Residues 133-152 (ATHGNSLSHRVHGSTGQNQT) form a disordered region. Glutamine 151 bears the N5-methylglutamine mark.

This sequence belongs to the universal ribosomal protein uL3 family. In terms of assembly, part of the 50S ribosomal subunit. Forms a cluster with proteins L14 and L19. Methylated by PrmB.

One of the primary rRNA binding proteins, it binds directly near the 3'-end of the 23S rRNA, where it nucleates assembly of the 50S subunit. The polypeptide is Large ribosomal subunit protein uL3 (Francisella philomiragia subsp. philomiragia (strain ATCC 25017 / CCUG 19701 / FSC 153 / O#319-036)).